Reading from the N-terminus, the 219-residue chain is MASSSSLRSTSCLASAAETDADNLCLRLGPPGSSITTTTTTGGADPAAKRSLGAKRSLESTDSMASGTGTSAAGDEHDDDTAAPAKAQVVGWPPVRAYRRNTFHQAAAAAAATKKGGDEKQKQQQQGGGLYVKVSMDGAPYLRKVDLKMCKGYRELREALDLLFTKCFSATASDGCSDGQFAIAYEDKDGDLMLVGDVPWEMFISSCKKLRIMKGSEAR.

An EAR-like (transcriptional repression) motif is present at residues 24–28; it reads LCLRL. Disordered regions lie at residues 24–88 and 109–128; these read LCLR…AKAQ and AAAATKKGGDEKQKQQQQGG. Positions 60-71 are enriched in polar residues; sequence STDSMASGTGTS. A PB1 domain is found at 129 to 215; it reads GLYVKVSMDG…SCKKLRIMKG (87 aa).

It belongs to the Aux/IAA family. As to quaternary structure, homodimers and heterodimers. As to expression, highly expressed in flowers. Expressed in seedlings.

It localises to the nucleus. Its function is as follows. Aux/IAA proteins are short-lived transcriptional factors that function as repressors of early auxin response genes at low auxin concentrations. This Oryza sativa subsp. japonica (Rice) protein is Auxin-responsive protein IAA24 (IAA24).